The sequence spans 152 residues: SsrA-binding protein (152 aa).

Belongs to the SmpB family.

Its subcellular location is the cytoplasm. Functionally, required for rescue of stalled ribosomes mediated by trans-translation. Binds to transfer-messenger RNA (tmRNA), required for stable association of tmRNA with ribosomes. tmRNA and SmpB together mimic tRNA shape, replacing the anticodon stem-loop with SmpB. tmRNA is encoded by the ssrA gene; the 2 termini fold to resemble tRNA(Ala) and it encodes a 'tag peptide', a short internal open reading frame. During trans-translation Ala-aminoacylated tmRNA acts like a tRNA, entering the A-site of stalled ribosomes, displacing the stalled mRNA. The ribosome then switches to translate the ORF on the tmRNA; the nascent peptide is terminated with the 'tag peptide' encoded by the tmRNA and targeted for degradation. The ribosome is freed to recommence translation, which seems to be the essential function of trans-translation. In Rickettsia montanensis, this protein is SsrA-binding protein.